The sequence spans 195 residues: Large ribosomal subunit protein eL18 (195 aa).

Lysine 126 is covalently cross-linked (Glycyl lysine isopeptide (Lys-Gly) (interchain with G-Cter in SUMO2)). Serine 137 bears the Phosphoserine mark. Positions 158–195 are disordered; it reads HFGKAPGTPHSHTKPYVRSKGRKFERARGRRASRGYKN. The residue at position 165 (threonine 165) is a Phosphothreonine. Composition is skewed to basic residues over residues 168–178 and 185–195; these read SHTKPYVRSKG and RGRRASRGYKN. Lysine 171 is covalently cross-linked (Glycyl lysine isopeptide (Lys-Gly) (interchain with G-Cter in SUMO2)).

This sequence belongs to the eukaryotic ribosomal protein eL18 family. Component of the large ribosomal subunit.

Its subcellular location is the cytoplasm. It is found in the cytosol. It localises to the rough endoplasmic reticulum. Component of the large ribosomal subunit. This Sus scrofa (Pig) protein is Large ribosomal subunit protein eL18 (RPL18).